Consider the following 406-residue polypeptide: Argininosuccinate synthase (406 aa).

Residues 11-19 and Ala38 each bind ATP; that span reads AYSGGLDTS. 2 residues coordinate L-citrulline: Tyr91 and Ser96. Gly121 serves as a coordination point for ATP. Positions 123, 127, and 128 each coordinate L-aspartate. Asn127 lines the L-citrulline pocket. L-citrulline contacts are provided by Arg131, Ser181, Ser190, Glu266, and Tyr278.

It belongs to the argininosuccinate synthase family. Type 1 subfamily. In terms of assembly, homotetramer.

The protein resides in the cytoplasm. It catalyses the reaction L-citrulline + L-aspartate + ATP = 2-(N(omega)-L-arginino)succinate + AMP + diphosphate + H(+). It participates in amino-acid biosynthesis; L-arginine biosynthesis; L-arginine from L-ornithine and carbamoyl phosphate: step 2/3. The chain is Argininosuccinate synthase from Campylobacter lari (strain RM2100 / D67 / ATCC BAA-1060).